Reading from the N-terminus, the 774-residue chain is Alpha,alpha-trehalose phosphorylase (774 aa).

Position 369 to 370 (Trp-369 to Asp-370) interacts with substrate. The active-site Proton donor is Glu-498. Substrate is bound at residue Lys-610–Gln-611.

The protein belongs to the glycosyl hydrolase 65 family. As to quaternary structure, homodimer.

The enzyme catalyses alpha,alpha-trehalose + phosphate = beta-D-glucose 1-phosphate + D-glucose. The protein operates within glycan degradation; trehalose degradation. With respect to regulation, inhibited by Cu(2+), Hg(2+), Mg(2+), Mn(2+), Pb(2+) and Zn(2+). Catalyzes the reversible phosphorolytic cleavage of trehalose. Phosphorolysis is specific for trehalose, but D-xylose, D-galactose, L-arabinose, D-fucose, L-fucose, D-glucosamine and 2-deoxy D-glucose can act as substitutes for D-glucose in the synthetic reaction. This chain is Alpha,alpha-trehalose phosphorylase (treP), found in Thermoanaerobacter brockii (Thermoanaerobium brockii).